Reading from the N-terminus, the 387-residue chain is tRNA N6-adenosine threonylcarbamoyltransferase (387 aa).

Fe cation contacts are provided by H112 and H116. Substrate-binding positions include 134 to 138 (LASGG), D167, G180, and N325. D353 lines the Fe cation pocket.

It belongs to the KAE1 / TsaD family. Fe(2+) is required as a cofactor.

It localises to the cytoplasm. It catalyses the reaction L-threonylcarbamoyladenylate + adenosine(37) in tRNA = N(6)-L-threonylcarbamoyladenosine(37) in tRNA + AMP + H(+). Functionally, required for the formation of a threonylcarbamoyl group on adenosine at position 37 (t(6)A37) in tRNAs that read codons beginning with adenine. Is involved in the transfer of the threonylcarbamoyl moiety of threonylcarbamoyl-AMP (TC-AMP) to the N6 group of A37, together with TsaE and TsaB. TsaD likely plays a direct catalytic role in this reaction. This Rickettsia prowazekii (strain Madrid E) protein is tRNA N6-adenosine threonylcarbamoyltransferase.